The chain runs to 519 residues: Asteroid homolog 1 (519 aa).

Belongs to the asteroid family.

It localises to the cytoplasm. The protein localises to the mitochondrion. This is Asteroid homolog 1 (ast1) from Schizosaccharomyces pombe (strain 972 / ATCC 24843) (Fission yeast).